The sequence spans 323 residues: tRNA U34 carboxymethyltransferase (323 aa).

Residues Lys91, Trp105, Lys110, Gly130, 152–154 (DPT), 181–182 (IE), Met196, Tyr200, and Arg315 each bind carboxy-S-adenosyl-L-methionine.

The protein belongs to the class I-like SAM-binding methyltransferase superfamily. CmoB family. In terms of assembly, homotetramer.

It catalyses the reaction carboxy-S-adenosyl-L-methionine + 5-hydroxyuridine(34) in tRNA = 5-carboxymethoxyuridine(34) in tRNA + S-adenosyl-L-homocysteine + H(+). Its function is as follows. Catalyzes carboxymethyl transfer from carboxy-S-adenosyl-L-methionine (Cx-SAM) to 5-hydroxyuridine (ho5U) to form 5-carboxymethoxyuridine (cmo5U) at position 34 in tRNAs. This is tRNA U34 carboxymethyltransferase from Salmonella gallinarum (strain 287/91 / NCTC 13346).